The primary structure comprises 315 residues: Thymidylate synthase (315 aa).

DUMP is bound by residues R29 and 156-157 (RR). C176 functions as the Nucleophile in the catalytic mechanism. Residues 213 to 216 (RSCD), N224, and 254 to 256 (HVY) each bind dUMP. Position 216 (D216) interacts with (6R)-5,10-methylene-5,6,7,8-tetrahydrofolate.

This sequence belongs to the thymidylate synthase family. Homodimer.

It carries out the reaction dUMP + (6R)-5,10-methylene-5,6,7,8-tetrahydrofolate = 7,8-dihydrofolate + dTMP. It functions in the pathway pyrimidine metabolism; dTTP biosynthesis. This Candida albicans (strain SC5314 / ATCC MYA-2876) (Yeast) protein is Thymidylate synthase (TMP1).